The sequence spans 284 residues: Bifunctional protein FolD 2 (284 aa).

NADP(+)-binding positions include 165–167 (GRG), threonine 192, and valine 233.

This sequence belongs to the tetrahydrofolate dehydrogenase/cyclohydrolase family. As to quaternary structure, homodimer.

It catalyses the reaction (6R)-5,10-methylene-5,6,7,8-tetrahydrofolate + NADP(+) = (6R)-5,10-methenyltetrahydrofolate + NADPH. It carries out the reaction (6R)-5,10-methenyltetrahydrofolate + H2O = (6R)-10-formyltetrahydrofolate + H(+). It participates in one-carbon metabolism; tetrahydrofolate interconversion. Functionally, catalyzes the oxidation of 5,10-methylenetetrahydrofolate to 5,10-methenyltetrahydrofolate and then the hydrolysis of 5,10-methenyltetrahydrofolate to 10-formyltetrahydrofolate. The chain is Bifunctional protein FolD 2 from Streptomyces avermitilis (strain ATCC 31267 / DSM 46492 / JCM 5070 / NBRC 14893 / NCIMB 12804 / NRRL 8165 / MA-4680).